Consider the following 416-residue polypeptide: Subtilisin-like protease 12 (416 aa).

Residues 1–19 form the signal peptide; sequence MSILKMMLIYFAIFWVVNA. A propeptide spanning residues 20 to 116 is cleaved from the precursor; it reads AQLLDIDSQG…VEPNKEMQVA (97 aa). The Inhibitor I9 domain occupies 35 to 115; sequence YIVVMKDRVS…FVEPNKEMQV (81 aa). N-linked (GlcNAc...) asparagine glycosylation is found at N123, N136, and N150. Residues 125–416 enclose the Peptidase S8 domain; it reads TWGLSRISHK…NKLLYNGSGA (292 aa). Active-site charge relay system residues include D157 and H188. N-linked (GlcNAc...) asparagine glycans are attached at residues N249, N305, N334, and N353. The Charge relay system role is filled by S362. N-linked (GlcNAc...) asparagine glycosylation is found at N404 and N412.

It belongs to the peptidase S8 family.

It is found in the secreted. Its function is as follows. Secreted subtilisin-like serine protease with keratinolytic activity that contributes to pathogenicity. This is Subtilisin-like protease 12 (SUB12) from Arthroderma benhamiae (strain ATCC MYA-4681 / CBS 112371) (Trichophyton mentagrophytes).